A 406-amino-acid chain; its full sequence is MRSWFPHAPTVSVPEIEPEEALSYRDEIRTRVRSYAFGLDDWRAKVKTRRAYLRKVRDEDESEILRVYGALLTVAAAGPRPVRHLIAEGESAMAETALYALRHEDESAMSYPEERVLSDLYLWDVRVLERDLGLYAVHFSFPLIHRSPEGQKLKVLVWERASLEKVLKEVRSNRVLGVRVLDPSGWNDVWICPRCGATRRGGTGDLEQDHARRCSNCRGRMRKPDPNLLEMLKEPEGYLIMHFKTLARTFREDVRRLVVSDIESRDDVEDEELREFCLKLFPKVRKRLERVEKGAGGRFPPCIRELLRRAQEGENLPHEARFALAAFLVNVGWDVDRVVEVFSNLPDFDEERTQYQVRHIAGEVGGGTRYLPPNCDKMKAWGLCPGKDCGVKNPLAYYRRPRADDG.

The [4Fe-4S] cluster site is built by Cys-302, Cys-375, Cys-384, and Cys-389.

It belongs to the eukaryotic-type primase large subunit family. Heterodimer of a small subunit (PriS) and a large subunit (PriL). It depends on [4Fe-4S] cluster as a cofactor.

Functionally, regulatory subunit of DNA primase, an RNA polymerase that catalyzes the synthesis of short RNA molecules used as primers for DNA polymerase during DNA replication. Stabilizes and modulates the activity of the small subunit, increasing the rate of DNA synthesis, and conferring RNA synthesis capability. The DNA polymerase activity may enable DNA primase to also catalyze primer extension after primer synthesis. May also play a role in DNA repair. The protein is DNA primase large subunit PriL of Methanopyrus kandleri (strain AV19 / DSM 6324 / JCM 9639 / NBRC 100938).